The following is a 137-amino-acid chain: Basic phospholipase A2 homolog bothropstoxin-I (137 aa).

The signal sequence occupies residues methionine 1 to glycine 16. 7 disulfides stabilise this stretch: cysteine 42/cysteine 131, cysteine 44/cysteine 60, cysteine 59/cysteine 111, cysteine 65/cysteine 137, cysteine 66/cysteine 104, cysteine 73/cysteine 97, and cysteine 91/cysteine 102. Positions lysine 121–lysine 133 are important for membrane-damaging activities in eukaryotes and bacteria; heparin-binding.

Belongs to the phospholipase A2 family. Group II subfamily. K49 sub-subfamily. Homodimer; non-covalently linked (probable alternative/compact dimer conformation in solution). Binds to heparin. As to expression, expressed by the venom gland.

The protein localises to the secreted. Suramin inhibits both myotoxic and muscle-paralyzing activities. Chicoric acid inhibits myotoxic activity. Zinc ions inhibits the myotoxic activity and the neuromuscular blockade. Heparin inhibits myotoxic activity. Snake venom phospholipase A2 homolog that lacks enzymatic activity. Shows local myotoxic activity. Induces inflammation, since it induces edema and leukocytes infiltration. In addition, it induces NLRP3 NLRP3, ASC (PYCARD), caspase-1 (CASP1), and IL-1beta (IL1B) gene expression in the gastrocnemius muscle, showing that it is able to activate NLRP3 inflammasome. It also damages artificial and myoblast membranes by a calcium-independent mechanism, has bactericidal activity, and induces neuromuscular blockade. A model of myotoxic mechanism has been proposed: an apo Lys49-PLA2 is activated by the entrance of a hydrophobic molecule (e.g. fatty acid) at the hydrophobic channel of the protein leading to a reorientation of a monomer. This reorientation causes a transition between 'inactive' to 'active' states, causing alignment of C-terminal and membrane-docking sites (MDoS) side-by-side and putting the membrane-disruption sites (MDiS) in the same plane, exposed to solvent and in a symmetric position for both monomers. The MDoS region stabilizes the toxin on membrane by the interaction of charged residues with phospholipid head groups. Subsequently, the MDiS region destabilizes the membrane with penetration of hydrophobic residues. This insertion causes a disorganization of the membrane, allowing an uncontrolled influx of ions (i.e. calcium and sodium), and eventually triggering irreversible intracellular alterations and cell death. The protein is Basic phospholipase A2 homolog bothropstoxin-I of Bothrops jararacussu (Jararacussu).